The chain runs to 504 residues: MQQSTPYLSFRGIGKTFPGVKALTDISFDCYAGQVHALMGENGAGKSTLLKILSGNYAPTTGSVVINGQEMSFSDTTAALNAGVAIIYQELHLVPEMTVAENIYLGQLPHKGGIVNRSLLNYEAGLQIKHLGMDIDPDTPLKYLSIGQWQMVEIAKALARNAKIIAFDEPTSSLSAREIDNLFRVIRELRKEGRVILYVSHRMEEIFALSDAITVFKDGRYVKTFTDMQQVDHDALVQAMVGRDIGDIYGWQPRSYGEERLRLDAVKAPGVRTPISLAVRSGEIVGLFGLVGAGRSELMKGMFGGTQITAGQVYIDQQPIDIRKPSHAITAGMMLCPEDRKAEGIIPVHSVRDNINISARRKHVLGGCVINNGWEENNADHHIRSLNIKTPGAEQLIMNLSGGNQQKAILGRWLSEEMKVILLDEPTRGIDVGAKHEIYNVIYALAAQGVAVLFASSDLPEVLGVADRIVVMREGEIAGELLHEQADERQALSLAMPKVSQAVA.

ABC transporter domains are found at residues 8–243 (LSFR…MVGR) and 256–499 (YGEE…MPKV). Residue 40–47 (GENGAGKS) participates in ATP binding.

It belongs to the ABC transporter superfamily. Arabinose importer (TC 3.A.1.2.2) family. In terms of assembly, the complex is composed of two ATP-binding proteins (AraG), two transmembrane proteins (AraH) and a solute-binding protein (AraF).

It localises to the cell inner membrane. It catalyses the reaction L-arabinose(out) + ATP + H2O = L-arabinose(in) + ADP + phosphate + H(+). Functionally, part of the ABC transporter complex AraFGH involved in arabinose import. Responsible for energy coupling to the transport system. The polypeptide is Arabinose import ATP-binding protein AraG (Escherichia coli O6:K15:H31 (strain 536 / UPEC)).